The following is a 309-amino-acid chain: Homoserine O-succinyltransferase (309 aa).

The active-site Acyl-thioester intermediate is Cys142. Lys163 and Ser192 together coordinate substrate. Catalysis depends on His235, which acts as the Proton acceptor. Glu237 is a catalytic residue. Arg249 is a binding site for substrate.

Belongs to the MetA family. In terms of assembly, homodimer.

It is found in the cytoplasm. It catalyses the reaction L-homoserine + succinyl-CoA = O-succinyl-L-homoserine + CoA. The protein operates within amino-acid biosynthesis; L-methionine biosynthesis via de novo pathway; O-succinyl-L-homoserine from L-homoserine: step 1/1. Its function is as follows. Transfers a succinyl group from succinyl-CoA to L-homoserine, forming succinyl-L-homoserine. In Escherichia coli (strain K12 / MC4100 / BW2952), this protein is Homoserine O-succinyltransferase.